The sequence spans 153 residues: Calmodulin-like protein 4 (153 aa).

EF-hand domains follow at residues 8–43 (DAIQ…LGTC), 44–79 (PTPG…QQKQ), 81–116 (DPEN…MGEK), and 117–152 (LTPE…PVPD).

This sequence belongs to the calmodulin family. In terms of assembly, associates with the IMAC/intermicrovillar adhesion complex.

The protein resides in the cell projection. Its subcellular location is the microvillus. Functionally, as part of the intermicrovillar adhesion complex/IMAC plays a role in epithelial brush border differentiation, controlling microvilli organization and length. Acts as a light chain for MYO7B and is required for efficient targeting of the IMAC to the tips of border brush microvilli. In Xenopus tropicalis (Western clawed frog), this protein is Calmodulin-like protein 4 (calml4).